Here is a 226-residue protein sequence, read N- to C-terminus: Ribonuclease 3 (226 aa).

Positions 6–128 (INKLQRKLGY…LIGGVFLDSD (123 aa)) constitute an RNase III domain. Glu41 is a binding site for Mg(2+). The active site involves Asp45. 2 residues coordinate Mg(2+): Asp114 and Glu117. Residue Glu117 is part of the active site. Residues 155-225 (DPKTRLQEYL…AEQALIKLGL (71 aa)) enclose the DRBM domain.

Belongs to the ribonuclease III family. Homodimer. The cofactor is Mg(2+).

Its subcellular location is the cytoplasm. The catalysed reaction is Endonucleolytic cleavage to 5'-phosphomonoester.. Functionally, digests double-stranded RNA. Involved in the processing of primary rRNA transcript to yield the immediate precursors to the large and small rRNAs (23S and 16S). Processes some mRNAs, and tRNAs when they are encoded in the rRNA operon. Processes pre-crRNA and tracrRNA of type II CRISPR loci if present in the organism. The protein is Ribonuclease 3 (rnc) of Pantoea ananatis (strain LMG 20103).